Here is a 448-residue protein sequence, read N- to C-terminus: 26S proteasome regulatory subunit 4 homolog (448 aa).

Over residues 1–10 the composition is skewed to polar residues; that stretch reads MGQAQSGNFS. The tract at residues 1-58 is disordered; the sequence is MGQAQSGNFSNFGDGANGDNKKDQKKDKPKYEPPVPTRTGRRKKKAQSGPDASAKLPT. Residues 19–31 show a composition bias toward basic and acidic residues; the sequence is DNKKDQKKDKPKY. An ATP-binding site is contributed by 232-239; that stretch reads GAPGTGKT.

The protein belongs to the AAA ATPase family.

The protein localises to the cytoplasm. The protein resides in the nucleus. Its function is as follows. The 26S proteasome is involved in the ATP-dependent degradation of ubiquitinated proteins. The regulatory (or ATPase) complex confers ATP dependency and substrate specificity to the 26S complex. In Schizosaccharomyces pombe (strain 972 / ATCC 24843) (Fission yeast), this protein is 26S proteasome regulatory subunit 4 homolog (mts2).